The sequence spans 51 residues: Small ribosomal subunit protein eS31 (51 aa).

4 residues coordinate Zn(2+): Cys21, Cys24, Cys39, and Cys42. A C4-type zinc finger spans residues 21 to 42; that stretch reads CPRCGPGVFLAEHEDRFSCGRC.

It belongs to the eukaryotic ribosomal protein eS31 family. As to quaternary structure, part of the 30S ribosomal subunit. Zn(2+) is required as a cofactor.

This is Small ribosomal subunit protein eS31 from Picrophilus torridus (strain ATCC 700027 / DSM 9790 / JCM 10055 / NBRC 100828 / KAW 2/3).